We begin with the raw amino-acid sequence, 126 residues long: Acidic phospholipase A2 2 (126 aa).

Residues 1–7 (SNRPMPL) constitute a propeptide that is removed on maturation. Intrachain disulfides connect cysteine 18/cysteine 78, cysteine 33/cysteine 125, cysteine 35/cysteine 51, cysteine 50/cysteine 106, cysteine 57/cysteine 99, cysteine 67/cysteine 92, and cysteine 85/cysteine 97. Ca(2+)-binding residues include tyrosine 34, glycine 36, and glycine 38. Histidine 54 is a catalytic residue. Aspartate 55 is a Ca(2+) binding site. The active site involves aspartate 100.

It belongs to the phospholipase A2 family. Group I subfamily. D49 sub-subfamily. Heterodimer formed between two homologous isoforms: isoform 1 and isoform 2. The cofactor is Ca(2+). In terms of tissue distribution, expressed by the venom gland.

It localises to the secreted. It carries out the reaction a 1,2-diacyl-sn-glycero-3-phosphocholine + H2O = a 1-acyl-sn-glycero-3-phosphocholine + a fatty acid + H(+). Functionally, PLA2 catalyzes the calcium-dependent hydrolysis of the 2-acyl groups in 3-sn-phosphoglycerides. The sequence is that of Acidic phospholipase A2 2 from Naja sagittifera (Andaman cobra).